The sequence spans 466 residues: UPF0652 protein C16A11.03c (466 aa).

Belongs to the UPF0652 family.

Its subcellular location is the cytoplasm. It is found in the nucleus. The protein is UPF0652 protein C16A11.03c of Schizosaccharomyces pombe (strain 972 / ATCC 24843) (Fission yeast).